Here is a 289-residue protein sequence, read N- to C-terminus: Phosphate import ATP-binding protein PstB 2 (289 aa).

The ABC transporter domain maps to 37–276; that stretch reads LHAKVEAFYY…HTPVIFQNPT (240 aa). 69–76 contributes to the ATP binding site; the sequence is GPSGCGKS.

Belongs to the ABC transporter superfamily. Phosphate importer (TC 3.A.1.7) family. As to quaternary structure, the complex is composed of two ATP-binding proteins (PstB), two transmembrane proteins (PstC and PstA) and a solute-binding protein (PstS).

It localises to the cell inner membrane. The catalysed reaction is phosphate(out) + ATP + H2O = ADP + 2 phosphate(in) + H(+). In terms of biological role, part of the ABC transporter complex PstSACB involved in phosphate import. Responsible for energy coupling to the transport system. The sequence is that of Phosphate import ATP-binding protein PstB 2 from Trichormus variabilis (strain ATCC 29413 / PCC 7937) (Anabaena variabilis).